The chain runs to 490 residues: Probable cytosol aminopeptidase (490 aa).

Residues Lys-257 and Asp-262 each coordinate Mn(2+). The active site involves Lys-269. Positions 281, 341, and 343 each coordinate Mn(2+). Arg-345 is a catalytic residue.

It belongs to the peptidase M17 family. Requires Mn(2+) as cofactor.

It localises to the cytoplasm. The enzyme catalyses Release of an N-terminal amino acid, Xaa-|-Yaa-, in which Xaa is preferably Leu, but may be other amino acids including Pro although not Arg or Lys, and Yaa may be Pro. Amino acid amides and methyl esters are also readily hydrolyzed, but rates on arylamides are exceedingly low.. It carries out the reaction Release of an N-terminal amino acid, preferentially leucine, but not glutamic or aspartic acids.. Its function is as follows. Presumably involved in the processing and regular turnover of intracellular proteins. Catalyzes the removal of unsubstituted N-terminal amino acids from various peptides. The sequence is that of Probable cytosol aminopeptidase from Prochlorococcus marinus (strain AS9601).